The following is a 102-amino-acid chain: Small integral membrane protein 29 (102 aa).

N-linked (GlcNAc...) asparagine glycosylation occurs at N3. A helical membrane pass occupies residues 21-41 (VLGPFFLITLVGVVVAVVMYV).

The protein resides in the membrane. This Mus musculus (Mouse) protein is Small integral membrane protein 29.